The sequence spans 300 residues: MLNHNSKVWIVNYACAIDYYLDKHKQQRGVLTPGGKGINMAIVMALFGIKPTVLTFLGQPTKDLFLQLLKPYQLDLVSFPATTQTRINVKLLDGAQTTEINDVTPLIEEQAVHEMIAYLKANVKPNDLLVLNGRFLQRDLVKLLDVAFSLTKYVVLDVDEPQLLQLLNQRQPWLMKPNRDEFVAMVNANNSNVDQQELVQLIKQFQTTQNLLMSDGAQGAYFFDQQQLLFMEAIPPQQLVSTTGAGDTLLGVFLANLLLDKDPVGSLKVAVNYASATISKLAVVNSNDQIVLKATNYYYL.

Residues 214–219 and 246–247 each bind ATP; these read SDGAQG and GD. The active-site Proton acceptor is Asp247.

The protein belongs to the carbohydrate kinase PfkB family.

It catalyses the reaction beta-D-fructose 1-phosphate + ATP = beta-D-fructose 1,6-bisphosphate + ADP + H(+). Functionally, catalyzes the ATP-dependent phosphorylation of fructose-l-phosphate to fructose-l,6-bisphosphate. The sequence is that of Putative 1-phosphofructokinase (fruK) from Mycoplasma pneumoniae (strain ATCC 29342 / M129 / Subtype 1) (Mycoplasmoides pneumoniae).